The primary structure comprises 298 residues: tRNA dimethylallyltransferase (298 aa).

16 to 23 lines the ATP pocket; sequence GPTASGKS. Residue 18 to 23 participates in substrate binding; it reads TASGKS. Interaction with substrate tRNA stretches follow at residues 41-44 and 165-169; these read DSMQ and QRIVR.

Belongs to the IPP transferase family. In terms of assembly, monomer. Requires Mg(2+) as cofactor.

It carries out the reaction adenosine(37) in tRNA + dimethylallyl diphosphate = N(6)-dimethylallyladenosine(37) in tRNA + diphosphate. In terms of biological role, catalyzes the transfer of a dimethylallyl group onto the adenine at position 37 in tRNAs that read codons beginning with uridine, leading to the formation of N6-(dimethylallyl)adenosine (i(6)A). In Rhizobium radiobacter (Agrobacterium tumefaciens), this protein is tRNA dimethylallyltransferase.